The following is a 517-amino-acid chain: NEDD8-activating enzyme E1 regulatory subunit (517 aa).

It belongs to the ubiquitin-activating E1 family. ULA1 subfamily. In terms of assembly, heterodimer of uba3 and ula1. The complex binds NEDD8/ubl1 and ubc12.

The protein resides in the cytoplasm. Its subcellular location is the nucleus. It functions in the pathway protein modification; protein neddylation. Its function is as follows. Regulatory subunit of the dimeric uba3-ula1 E1 enzyme. E1 activates NEDD8/ubl1 by first adenylating its C-terminal glycine residue with ATP, thereafter linking this residue to the side chain of the catalytic cysteine, yielding a NEDD8-UBA3 thioester and free AMP. E1 finally transfers NEDD8 to the catalytic cysteine of ubc12. The protein is NEDD8-activating enzyme E1 regulatory subunit (uba5) of Schizosaccharomyces pombe (strain 972 / ATCC 24843) (Fission yeast).